The chain runs to 161 residues: Small ribosomal subunit protein uS9 (161 aa).

It belongs to the universal ribosomal protein uS9 family.

The sequence is that of Small ribosomal subunit protein uS9 from Methylobacterium radiotolerans (strain ATCC 27329 / DSM 1819 / JCM 2831 / NBRC 15690 / NCIMB 10815 / 0-1).